We begin with the raw amino-acid sequence, 465 residues long: Zinc finger CCCH domain-containing protein 58 (465 aa).

The tract at residues 1–26 (MERYGGAGEDESRSDPSHEWSAQGTE) is disordered. 3 C3H1-type zinc fingers span residues 51-79 (RPDE…HPRN), 97-125 (RMGQ…HPRQ), and 145-173 (RPGE…HPVP). Disordered stretches follow at residues 173–200 (PPGV…LQSQ) and 274–302 (LSPS…QRPE). The segment covering 177 to 191 (QAPSQQQQQQLSAGP) has biased composition (low complexity). Residues 283 to 298 (SGPSSTGVSNKEQTFP) are compositionally biased toward polar residues. C3H1-type zinc fingers lie at residues 300-328 (RPEQ…HPME) and 345-373 (RPGA…HSLG). Positions 397 to 431 (SLGTLAPSSSSDQCTELISSSSIEPITTTTGGSET) are enriched in low complexity. The tract at residues 397 to 465 (SLGTLAPSSS…SASNEAKTSS (69 aa)) is disordered. Basic and acidic residues predominate over residues 444–453 (SHPEPAETNK). Positions 454-465 (GDSASNEAKTSS) are enriched in polar residues.

The protein localises to the nucleus. This is Zinc finger CCCH domain-containing protein 58 from Arabidopsis thaliana (Mouse-ear cress).